The chain runs to 418 residues: F-box protein At5g03970 (418 aa).

Residues serine 18–alanine 66 enclose the F-box domain.

The sequence is that of F-box protein At5g03970 from Arabidopsis thaliana (Mouse-ear cress).